A 288-amino-acid chain; its full sequence is ATP synthase gamma chain (288 aa).

This sequence belongs to the ATPase gamma chain family. In terms of assembly, F-type ATPases have 2 components, CF(1) - the catalytic core - and CF(0) - the membrane proton channel. CF(1) has five subunits: alpha(3), beta(3), gamma(1), delta(1), epsilon(1). CF(0) has three main subunits: a, b and c.

It localises to the cell inner membrane. In terms of biological role, produces ATP from ADP in the presence of a proton gradient across the membrane. The gamma chain is believed to be important in regulating ATPase activity and the flow of protons through the CF(0) complex. The protein is ATP synthase gamma chain of Glaesserella parasuis serovar 5 (strain SH0165) (Haemophilus parasuis).